Consider the following 293-residue polypeptide: Probable endonuclease 4 (293 aa).

The Zn(2+) site is built by His-75, His-115, Glu-153, Asp-187, His-190, His-224, Asp-237, His-239, and Glu-269.

Belongs to the AP endonuclease 2 family. Zn(2+) is required as a cofactor.

It catalyses the reaction Endonucleolytic cleavage to 5'-phosphooligonucleotide end-products.. Its function is as follows. Endonuclease IV plays a role in DNA repair. It cleaves phosphodiester bonds at apurinic or apyrimidinic (AP) sites, generating a 3'-hydroxyl group and a 5'-terminal sugar phosphate. The sequence is that of Probable endonuclease 4 from Chlamydia pneumoniae (Chlamydophila pneumoniae).